The chain runs to 251 residues: MPTFLLVNDDGYFSPGINALREALKSLGRVVVVAPDRNLSGVGHSLTFTEPLKMRKIDTDFYTVIDGTPADCVHLGYRVILEEKKPDLVLSGINEGPNLGEDITYSGTVSGAMEGRILGIPSIAFSAFGRENIMFEEIAKVCVDIVKKVLNEGIPEDTYLNVNIPNLRYEEIKGIKVTRQGKRAYKERVFKYIDPYGKPFYWIAAEEFGWHAEEGTDYWAVLNGYVSVTPLHLDLTNYKVMKSIKYLEDSP.

A divalent metal cation-binding residues include Asp9, Asp10, Ser40, and Asn94.

The protein belongs to the SurE nucleotidase family. It depends on a divalent metal cation as a cofactor.

It is found in the cytoplasm. The catalysed reaction is a ribonucleoside 5'-phosphate + H2O = a ribonucleoside + phosphate. Nucleotidase that shows phosphatase activity on nucleoside 5'-monophosphates. The sequence is that of 5'-nucleotidase SurE from Aquifex aeolicus (strain VF5).